Here is a 509-residue protein sequence, read N- to C-terminus: Ribonuclease Y (509 aa).

Residues Ile3–Gly23 traverse the membrane as a helical segment. Residues Thr197–Leu257 form the KH domain. The HD domain occupies Val323–Ser418.

This sequence belongs to the RNase Y family.

Its subcellular location is the cell membrane. Endoribonuclease that initiates mRNA decay. The protein is Ribonuclease Y of Borreliella afzelii (strain PKo) (Borrelia afzelii).